We begin with the raw amino-acid sequence, 215 residues long: Probable transaldolase (215 aa).

Lys-83 functions as the Schiff-base intermediate with substrate in the catalytic mechanism.

The protein belongs to the transaldolase family. Type 3B subfamily.

It is found in the cytoplasm. The enzyme catalyses D-sedoheptulose 7-phosphate + D-glyceraldehyde 3-phosphate = D-erythrose 4-phosphate + beta-D-fructose 6-phosphate. It functions in the pathway carbohydrate degradation; pentose phosphate pathway; D-glyceraldehyde 3-phosphate and beta-D-fructose 6-phosphate from D-ribose 5-phosphate and D-xylulose 5-phosphate (non-oxidative stage): step 2/3. Functionally, transaldolase is important for the balance of metabolites in the pentose-phosphate pathway. This is Probable transaldolase from Desulforudis audaxviator (strain MP104C).